The following is a 1262-amino-acid chain: Nucleoporin NUP120 (1262 aa).

Disordered regions lie at residues 36–58 (YGRS…DDEK), 770–791 (VSPS…GQDE), and 1128–1196 (DVPP…EDQQ). Over residues 770–786 (VSPSKSRSGSSSPTLSK) the composition is skewed to low complexity. Positions 1165–1185 (DSRIEELARLLDSESAGDKKA) are enriched in basic and acidic residues.

In terms of assembly, component of the nuclear pore complex (NPC). The nuclear pore complex (NPC) constitutes the exclusive means of nucleocytoplasmic transport. NPCs allow the passive diffusion of ions and small molecules and the active, nuclear transport receptor-mediated bidirectional transport of macromolecules such as proteins, RNAs, ribonucleoparticles (RNPs), and ribosomal subunits across the nuclear envelope. Due to its 8-fold rotational symmetry, all subunits are present with 8 copies or multiples thereof.

The protein resides in the nucleus. The protein localises to the nuclear pore complex. It is found in the nucleus membrane. In terms of biological role, functions as a component of the nuclear pore complex (NPC). NPC components, collectively referred to as nucleoporins (NUPs), can play the role of both NPC structural components and of docking or interaction partners for transiently associated nuclear transport factors. NUP120 is involved in nuclear poly(A)+ RNA and pre-ribosome export, in GSP1 nuclear import, in NPC assembly and distribution, as well as in nuclear envelope organization. The sequence is that of Nucleoporin NUP120 (NUP120) from Chaetomium thermophilum (strain DSM 1495 / CBS 144.50 / IMI 039719) (Thermochaetoides thermophila).